A 467-amino-acid chain; its full sequence is Regulatory protein NPR6 (467 aa).

Positions 27 to 111 (SDVTFSVEGR…LYSGQVSIVP (85 aa)) constitute a BTB domain. Residues 117–131 (RSNCGDRGCWHTHCT) form a C2HC NPR-type zinc finger. 4 residues coordinate Zn(2+): C120, C125, H127, and C130. ANK repeat units follow at residues 247–276 (QKIRRMRRALDSSDVELVKLMVMGEGLNLD), 277–306 (ESLALIYAVENCSREVVKALLELGAADVNY), 311–340 (TGKTALHIAAEMVSPDMVAVLLDHHADPNV), and 344–378 (DGITPLDILRTLTSDFLFKGAIPGLTHIEPNKLRL). Positions 434–467 (RDIGDDNSNQREGMNLHHHHHDPSTMYHHHHHHF) are disordered. Over residues 449 to 467 (LHHHHHDPSTMYHHHHHHF) the composition is skewed to basic residues.

This sequence belongs to the plant 'ANKYRIN-BTB/POZ' family. 'NOOT-BOP-COCH-like' (NBCL) subfamily. In terms of assembly, homodimer or heterodimer with BOP2. Interacts with PAN.

Its subcellular location is the cytoplasm. The protein resides in the nucleus. It participates in protein modification; protein ubiquitination. Functionally, may act as a substrate-specific adapter of an E3 ubiquitin-protein ligase complex (CUL3-RBX1-BTB) which mediates the ubiquitination and subsequent proteasomal degradation of target proteins. Acts redundantly with BOP2. BOP1/2 promote leaf and floral meristem fate and determinacy in a pathway targeting AP1 and AGL24. BOP1/2 act as transcriptional co-regulators through direct interaction with TGA factors, including PAN, a direct regulator of AP1. Controls lateral organ fate through positive regulation of adaxial-abaxial polarity genes ATHB-14/PHB, YAB1/FIL and YAB3, and through positive regulation of LOB domain-containing genes LOB, LBD6/AS2 and LBD36. Promotes and maintains a developmentally determinate state in leaf cells through the negative regulation of JAG, JGL and class I KNOX genes. Is also involved in nectary development, formation of normal abscission zones (AZs) and suppression of bract formation, probably by regulating the cell wall disorganization. The chain is Regulatory protein NPR6 from Arabidopsis thaliana (Mouse-ear cress).